We begin with the raw amino-acid sequence, 306 residues long: MLAATLSVGLIAPLASPIQESRANTNIENIGDGAEVIKRTEDVSSKKWGVTQNVQFDFVKDKKYNKDALIVKMQGFINSRTSFSDVKGSGYELTKRMIWPFQYNIGLTTKDPNVSLINYLPKNKIETTDVGQTLGYNIGGNFQSAPSIGGNGSFNYSKTISYTQKSYVSEVDKQNSKSVKWGVKANEFVTPDGKKSAHDRYLFVQSPNGPTGSAREYFAPDNQLPPLVQSGFNPSFITTLSHEKGSSDTSEFEISYGRNLDITYATLFPRTGIYAERKHNAFVNRNFVVRYEVNWKTHEIKVKGHN.

A signal peptide spans Met-1–Ala-23.

Belongs to the aerolysin family. In terms of assembly, toxicity requires sequential binding and synergistic association of a class S and a class F component which form heterooligomeric complexes. LukEv (class S) associates with LukDv (class F).

Its subcellular location is the secreted. Its function is as follows. Part of a bi-component leucotoxin that acts by forming pores in the membrane of the target cells. The activity of LukEv-LukDv to rabbit leukocytes is similar to that of the Panton-Valentine leucocidin (PVL). LukEv-LukDv is hemolytic to rabbit red blood cells although the activity is only 8% of gamma-hemolysin. The chain is Leucotoxin LukEv (lukEv) from Staphylococcus aureus (strain NCTC 8325 / PS 47).